Here is a 710-residue protein sequence, read N- to C-terminus: Polyribonucleotide nucleotidyltransferase (710 aa).

Residues Asp-487 and Asp-493 each contribute to the Mg(2+) site. The region spanning 554-613 (PRIEVMNIPVDKIREVIGSGGKVIREIVEKTGAKINIEDDGTVKIASSSGKEIEAARKWI) is the KH domain. The S1 motif domain occupies 623-691 (GQIYEGTVVK…ERGKVRLSMK (69 aa)).

It belongs to the polyribonucleotide nucleotidyltransferase family. Mg(2+) is required as a cofactor.

It is found in the cytoplasm. The catalysed reaction is RNA(n+1) + phosphate = RNA(n) + a ribonucleoside 5'-diphosphate. Its function is as follows. Involved in mRNA degradation. Catalyzes the phosphorolysis of single-stranded polyribonucleotides processively in the 3'- to 5'-direction. This is Polyribonucleotide nucleotidyltransferase from Rhizobium rhizogenes (strain K84 / ATCC BAA-868) (Agrobacterium radiobacter).